Reading from the N-terminus, the 206-residue chain is Imidazole glycerol phosphate synthase subunit hisH (206 aa).

Positions 2-206 (KVGLVDYSMG…REVMKKAASL (205 aa)) constitute a Glutamine amidotransferase type-1 domain. Catalysis depends on C80, which acts as the Nucleophile. Residues H184 and E186 contribute to the active site.

Heterodimer of hisH and hisF.

Its subcellular location is the plastid. It localises to the chloroplast. It carries out the reaction 5-[(5-phospho-1-deoxy-D-ribulos-1-ylimino)methylamino]-1-(5-phospho-beta-D-ribosyl)imidazole-4-carboxamide + L-glutamine = D-erythro-1-(imidazol-4-yl)glycerol 3-phosphate + 5-amino-1-(5-phospho-beta-D-ribosyl)imidazole-4-carboxamide + L-glutamate + H(+). The enzyme catalyses L-glutamine + H2O = L-glutamate + NH4(+). The protein operates within amino-acid biosynthesis; L-histidine biosynthesis; L-histidine from 5-phospho-alpha-D-ribose 1-diphosphate: step 5/9. IGPS catalyzes the conversion of PRFAR and glutamine to IGP, AICAR and glutamate. The HisH subunit catalyzes the hydrolysis of glutamine to glutamate and ammonia as part of the synthesis of IGP and AICAR. The resulting ammonia molecule is channeled to the active site of HisF. This Cyanidioschyzon merolae (strain NIES-3377 / 10D) (Unicellular red alga) protein is Imidazole glycerol phosphate synthase subunit hisH.